The chain runs to 493 residues: Cyclin-dependent kinase-like 2 (493 aa).

The Protein kinase domain maps to 4–287 (YENLGLVGEG…CAELLHHDFF (284 aa)). ATP contacts are provided by residues 10 to 18 (VGEGSYGMV) and lysine 33. The short motif at 45 to 51 (KKIAMRE) is the [NKR]KIAxRE element. Aspartate 126 serves as the catalytic Proton acceptor. The disordered stretch occupies residues 363-384 (GEKAEKGNRASNASCLHDSRTS).

This sequence belongs to the protein kinase superfamily. CMGC Ser/Thr protein kinase family. CDC2/CDKX subfamily. Expressed in testis and kidney, and at lower level in brain and lung.

It localises to the cytoplasm. It is found in the nucleus. The catalysed reaction is L-seryl-[protein] + ATP = O-phospho-L-seryl-[protein] + ADP + H(+). It catalyses the reaction L-threonyl-[protein] + ATP = O-phospho-L-threonyl-[protein] + ADP + H(+). The protein is Cyclin-dependent kinase-like 2 of Homo sapiens (Human).